The following is a 191-amino-acid chain: Photosystem I assembly protein Ycf4 (191 aa).

Helical transmembrane passes span 34-54 (VASM…SSYF) and 68-88 (IFVP…LLAI).

Belongs to the Ycf4 family.

It localises to the cellular thylakoid membrane. In terms of biological role, seems to be required for the assembly of the photosystem I complex. The polypeptide is Photosystem I assembly protein Ycf4 (Prochlorococcus marinus (strain NATL2A)).